We begin with the raw amino-acid sequence, 308 residues long: Urease accessory protein UreD (308 aa).

It belongs to the UreD family. In terms of assembly, ureD, UreF and UreG form a complex that acts as a GTP-hydrolysis-dependent molecular chaperone, activating the urease apoprotein by helping to assemble the nickel containing metallocenter of UreC. The UreE protein probably delivers the nickel.

It is found in the cytoplasm. In terms of biological role, required for maturation of urease via the functional incorporation of the urease nickel metallocenter. This Psychromonas ingrahamii (strain DSM 17664 / CCUG 51855 / 37) protein is Urease accessory protein UreD.